Reading from the N-terminus, the 1420-residue chain is DNA-directed RNA polymerase subunit beta' (1420 aa).

Zn(2+)-binding residues include C70, C72, C85, and C88. Residues D464, D466, and D468 each coordinate Mg(2+). Zn(2+) is bound by residues C823, C897, C904, and C907.

It belongs to the RNA polymerase beta' chain family. The RNAP catalytic core consists of 2 alpha, 1 beta, 1 beta' and 1 omega subunit. When a sigma factor is associated with the core the holoenzyme is formed, which can initiate transcription. The cofactor is Mg(2+). Requires Zn(2+) as cofactor.

The catalysed reaction is RNA(n) + a ribonucleoside 5'-triphosphate = RNA(n+1) + diphosphate. Its function is as follows. DNA-dependent RNA polymerase catalyzes the transcription of DNA into RNA using the four ribonucleoside triphosphates as substrates. This Polynucleobacter asymbioticus (strain DSM 18221 / CIP 109841 / QLW-P1DMWA-1) (Polynucleobacter necessarius subsp. asymbioticus) protein is DNA-directed RNA polymerase subunit beta'.